The primary structure comprises 344 residues: Transmembrane protein 82 (344 aa).

A run of 8 helical transmembrane segments spans residues 29-49 (LVGA…LYIV), 75-95 (LSLL…LVVL), 117-137 (LFLL…DYLH), 139-159 (GAPH…LILW), 197-217 (FLWR…VAVI), 230-246 (FWTP…IYMQ), 257-277 (MAYQ…MTVG), and 282-302 (ILHI…AGVM). The segment at 317-344 (NPRKYPVSRAPKSTREGRTLQRETSLEE) is disordered. The segment covering 329 to 344 (STREGRTLQRETSLEE) has biased composition (basic and acidic residues).

This sequence belongs to the TMEM82 family.

It is found in the membrane. This is Transmembrane protein 82 (tmem82) from Xenopus tropicalis (Western clawed frog).